The sequence spans 184 residues: ATP synthase subunit b, chloroplastic (184 aa).

A helical transmembrane segment spans residues 27 to 49 (LATNPINLSVVLGVLIFFGKGVL).

The protein belongs to the ATPase B chain family. In terms of assembly, F-type ATPases have 2 components, F(1) - the catalytic core - and F(0) - the membrane proton channel. F(1) has five subunits: alpha(3), beta(3), gamma(1), delta(1), epsilon(1). F(0) has four main subunits: a(1), b(1), b'(1) and c(10-14). The alpha and beta chains form an alternating ring which encloses part of the gamma chain. F(1) is attached to F(0) by a central stalk formed by the gamma and epsilon chains, while a peripheral stalk is formed by the delta, b and b' chains.

It is found in the plastid. It localises to the chloroplast thylakoid membrane. Functionally, f(1)F(0) ATP synthase produces ATP from ADP in the presence of a proton or sodium gradient. F-type ATPases consist of two structural domains, F(1) containing the extramembraneous catalytic core and F(0) containing the membrane proton channel, linked together by a central stalk and a peripheral stalk. During catalysis, ATP synthesis in the catalytic domain of F(1) is coupled via a rotary mechanism of the central stalk subunits to proton translocation. Component of the F(0) channel, it forms part of the peripheral stalk, linking F(1) to F(0). The sequence is that of ATP synthase subunit b, chloroplastic from Oenothera elata subsp. hookeri (Hooker's evening primrose).